Here is a 549-residue protein sequence, read N- to C-terminus: Zinc finger protein 382 (549 aa).

The tract at residues 1–105 is mediates interaction with TRIM28; it reads MNCHSVPLQG…DKPPTSIVII (105 aa). 2 represses transcription regions span residues 10–51 and 75–210; these read GPVS…FISV and MFPS…PEQR. Residues 12–83 form the KRAB domain; it reads VSFKDVTVDF…RMFPSQSYLE (72 aa). 10 C2H2-type zinc fingers span residues 211–233, 295–317, 323–345, 351–373, 379–401, 407–429, 435–457, 463–485, 491–513, and 519–541; these read FECD…DRAH, FQCP…QRIH, YICS…EKTH, YLCV…HKTH, YECT…QRTH, YQCA…QRTH, YMCS…QRIH, YVCS…YRIH, NGCP…QKTH, and YECH…QKTH. Residues 295-549 are required for transcriptional repression activity; probably mediates sequence-specific DNA-binding; the sequence is FQCPYCGNSF…THKAETVRFQ (255 aa).

The protein belongs to the krueppel C2H2-type zinc-finger protein family. Interacts with TRIM28; enhances the transcriptional repressor activity. As to expression, ubiquitously expressed with higher expression in lung, kidney and testis.

It is found in the nucleus. In terms of biological role, functions as a sequence-specific transcriptional repressor. This Rattus norvegicus (Rat) protein is Zinc finger protein 382 (Znf382).